A 359-amino-acid chain; its full sequence is Ribosomal RNA small subunit methyltransferase mra1 (359 aa).

Positions Met-1 to Arg-10 are enriched in basic residues. Disordered regions lie at residues Met-1–Glu-62 and Val-98–Arg-118. Residue Ser-12 is modified to Phosphoserine. The segment covering Lys-18–Thr-39 has biased composition (polar residues). Thr-33 carries the phosphothreonine modification. Ser-100 bears the Phosphoserine mark. S-adenosyl-L-methionine-binding positions include Leu-287, Gly-314, Gly-319–Asp-321, and Ile-334–Leu-339.

It belongs to the class IV-like SAM-binding methyltransferase superfamily. RNA methyltransferase NEP1 family. As to quaternary structure, homodimer.

It is found in the nucleus. It localises to the nucleolus. It catalyses the reaction a pseudouridine in rRNA + S-adenosyl-L-methionine = an N(1)-methylpseudouridine in rRNA + S-adenosyl-L-homocysteine + H(+). Functionally, S-adenosyl-L-methionine-dependent pseudouridine N(1)-methyltransferase that methylates the pseudouridine corresponding to position 1189 (Psi1189) in S.cerevisiae 18S rRNA. Involved the biosynthesis of the hypermodified N1-methyl-N3-(3-amino-3-carboxypropyl) pseudouridine (m1acp3-Psi) conserved in eukaryotic 18S rRNA. Also has an essential role in 40S ribosomal subunit biogenesis independent on its methyltransferase activity, facilitating the incorporation of ribosomal protein S19 during the formation of pre-ribosomes. Essential for cell growth. It also has a key role in promoting the mating function. In Schizosaccharomyces pombe (strain 972 / ATCC 24843) (Fission yeast), this protein is Ribosomal RNA small subunit methyltransferase mra1.